Here is a 420-residue protein sequence, read N- to C-terminus: uncharacterized protein (420 aa).

An N-terminal signal peptide occupies residues 1-25 (MRYAMNKIPALLLVGALIIATVASG). Cys-26 carries the N-acetylcysteine modification. A lipid anchor (S-archaeol cysteine) is attached at Cys-26.

The protein belongs to the bacterial solute-binding protein 1 family.

The protein localises to the cell membrane. Probably part of a binding-protein-dependent transport system PH1036/38/39. This is an uncharacterized protein from Pyrococcus horikoshii (strain ATCC 700860 / DSM 12428 / JCM 9974 / NBRC 100139 / OT-3).